The following is a 642-amino-acid chain: Influenza virus NS1A-binding protein homolog (642 aa).

One can recognise a BTB domain in the interval 32-99 (CDVRLQVCGH…AYTAQLKADK (68 aa)). Residues 134–233 (CISYRNFASC…YYSADHKLLD (100 aa)) form the BACK domain. S246, S277, S322, S336, and S338 each carry phosphoserine. The interval 257 to 281 (KPPRENGHKQISGSSTGCLSSPNAS) is disordered. The segment covering 265-281 (KQISGSSTGCLSSPNAS) has biased composition (polar residues). Kelch repeat units lie at residues 369 to 415 (KLIA…VLMG), 416 to 463 (QLYV…ALNG), 465 to 512 (LYIV…ELGG), 513 to 559 (YLYI…VLDG), 561 to 606 (LFVG…TVGN), and 608 to 642 (IYAVGGFDGNEFLNTVEVYNPQSNEWSPYTKIFQF).

It belongs to the BTB-kelch protein family. In terms of assembly, homodimer; through the BTB domain. Interacts with AHR/Aryl hydrocarbon receptor. Interacts (via BACK domain) with pre-mRNA-binding protein HNRNPK; the interaction is direct. Interacts (via BACK domain) with splicing factor PTBP1; the interaction is direct. Interacts (via Kelch repeats) with RNA polymerase POLR2A (via C-terminal domain). Interacts (via BACK domain) with splicing factor SNRPA; the interaction is indirect. Interacts (via Kelch repeats) with splicing factor SART1. Interacts (via BACK domain) with ALYREF; the interaction is indirect and likely plays a role in mRNA nuclear export. Interacts (via Kelch repeats) with KLHL20 (via Kelch repeats); this interaction blocks the assembly of Cul3-KLHL20 complex. In terms of tissue distribution, ubiquitous expression. In the heart, the highest expression is detected in the ventricles and the lowest in the atria. Expressed in dendrites and spines in neurons.

It is found in the cytoplasm. Its subcellular location is the cytoskeleton. The protein resides in the nucleus. Involved in many cell functions, including pre-mRNA splicing, the aryl hydrocarbon receptor (AHR) pathway, F-actin organization and protein ubiquitination. Plays a role in the dynamic organization of the actin skeleton as a stabilizer of actin filaments by association with F-actin through Kelch repeats. Protects cells from cell death induced by actin destabilization. Functions as a modifier of the AHR/Aryl hydrocarbon receptor pathway increasing the concentration of AHR available to activate transcription. In addition, functions as a negative regulator of BCR(KLHL20) E3 ubiquitin ligase complex to prevent ubiquitin-mediated proteolysis of PML and DAPK1, two tumor suppressors. Inhibits pre-mRNA splicing (in vitro). May play a role in mRNA nuclear export. Its function is as follows. May play a role in cell cycle progression in the nucleus. This is Influenza virus NS1A-binding protein homolog from Mus musculus (Mouse).